Reading from the N-terminus, the 444-residue chain is Serine/threonine-protein kinase 2 (444 aa).

One can recognise a Protein kinase domain in the interval 87–444 (NRDFYHLSTG…WIDGKSTSHQ (358 aa)). Residues 93–101 (LSTGGYGII) and K118 each bind ATP. The active-site Proton acceptor is the D307.

This sequence belongs to the protein kinase superfamily. Ser/Thr protein kinase family. Poxviruses subfamily. Phosphorylated in vivo. Autophosphorylated in vitro.

The protein localises to the host endoplasmic reticulum. The protein resides in the host endoplasmic reticulum-Golgi intermediate compartment. It carries out the reaction L-seryl-[protein] + ATP = O-phospho-L-seryl-[protein] + ADP + H(+). It catalyses the reaction L-threonyl-[protein] + ATP = O-phospho-L-threonyl-[protein] + ADP + H(+). Essential serine-protein kinase involved in the early stage of virion morphogenesis. The sequence is that of Serine/threonine-protein kinase 2 (OPG054) from Vertebrata (FPV).